Consider the following 95-residue polypeptide: Alpha-conotoxin GeXXA (95 aa).

The first 21 residues, 1–21, serve as a signal peptide directing secretion; sequence MPKQEKMMLVLLILPLPYCNA. Residues 22–45 constitute a propeptide that is removed on maturation; it reads AGVTTVQWGGHGDGLDRYLQRGVR. Intrachain disulfides connect C64–C73, C69–C81, C74–C91, and C79–C93.

The protein belongs to the conotoxin D superfamily. As to quaternary structure, homodimer. Pseudo-homodimer (identical sequence, different post-translational modifications). Expressed by the venom duct.

It localises to the secreted. Its function is as follows. Alpha-D-conopeptides act as non-competitive inhibitors of nicotinic acetylcholine receptors (nAChR). Through its two C-terminal domains, this homodimeric protein would bind to two nAChR allosteric sites, located outside the nAChR C-loop of the principal binding face and at the adjacent binding interface in a clockwise direction. This toxin has strong inhibitory activity on rat alpha-9-alpha-10 (CHRNA9-CHRNA10) (IC(50)=1.2 nM) and a moderate inhibitory activity on human alpha-7 (CHRNA7) (IC(50)=210 nM), rat alpha-3-beta-2 (CHRNA3-CHRNB2) (IC(50)=498 nM), rat alpha-3-beta-4 (CHRNA3-CHRNB4) (IC(50)=614 nM) and rat alpha-1-beta-1-delta-epsilon (CHRNA1-CHRNB1-CHRNE-CHRND) (IC(50)=743 nM) subtypes. Shows a weaker inhibitory activity on human alpha-9-alpha-10 (IC(50)=28 nM) than on the rat channel. This is explained by a different residue in the probable binding site (His-31 in rat alpha-10 and Leu-31 in human). The protein is Alpha-conotoxin GeXXA of Conus generalis (General cone).